Consider the following 386-residue polypeptide: mRNA-capping enzyme subunit beta (386 aa).

The segment at Met-1–Ser-137 is disordered. 2 stretches are compositionally biased toward polar residues: residues Val-20 to Pro-32 and Lys-41 to Met-56. A compositionally biased stretch (acidic residues) spans Glu-57 to Ala-67. Over residues Arg-93–Arg-115 the composition is skewed to basic and acidic residues.

This sequence belongs to the fungal TPase family. In terms of assembly, heterodimer. The mRNA-capping enzyme is composed of two separate chains alpha and beta, respectively a mRNA guanylyltransferase and an mRNA 5'-triphosphate monophosphatase. Mg(2+) serves as cofactor.

Its subcellular location is the nucleus. It catalyses the reaction a 5'-end triphospho-ribonucleoside in mRNA + H2O = a 5'-end diphospho-ribonucleoside in mRNA + phosphate + H(+). Functionally, first step of mRNA capping. Converts the 5'-triphosphate end of a nascent mRNA chain into a diphosphate end. The polypeptide is mRNA-capping enzyme subunit beta (CET1) (Yarrowia lipolytica (strain CLIB 122 / E 150) (Yeast)).